We begin with the raw amino-acid sequence, 29 residues long: Galanin (29 aa).

A Threonine amide modification is found at threonine 29.

This sequence belongs to the galanin family.

The protein localises to the secreted. Its function is as follows. Contracts smooth muscle of the gastrointestinal and genitourinary tract, regulates growth hormone release, modulates insulin release, and may be involved in the control of adrenal secretion. In Gallus gallus (Chicken), this protein is Galanin (GAL).